The primary structure comprises 116 residues: UPF0342 protein lhv_1666 (116 aa).

It belongs to the UPF0342 family.

The sequence is that of UPF0342 protein lhv_1666 from Lactobacillus helveticus (strain DPC 4571).